Reading from the N-terminus, the 615-residue chain is Homologous recombination OB-fold protein (615 aa).

3 disordered regions span residues 42 to 75 (LRPV…PRLC), 213 to 326 (PWPS…PVTQ), and 546 to 590 (DFLE…FPEE). A Phosphoserine modification is found at Ser-47. Polar residues-rich tracts occupy residues 47-71 (SRPQ…NQSV), 232-241 (SCVSTSQQRG), and 257-275 (IRSS…SPRA). Positions 302–317 (SSRAPVSSVESPVSTP) are enriched in low complexity.

In terms of assembly, interacts with MCM8; this interaction is necessary for MCM8-MCM9 helicase complex recruitment to DNA damage sites. Interacts with RPA1; this interaction associates HROB with the RPA complex.

The protein localises to the nucleus. It is found in the chromosome. DNA-binding protein involved in homologous recombination that acts by recruiting the MCM8-MCM9 helicase complex to sites of DNA damage to promote DNA repair synthesis. This Mus musculus (Mouse) protein is Homologous recombination OB-fold protein.